The sequence spans 248 residues: Phosphoadenosine 5'-phosphosulfate reductase (248 aa).

The active-site Nucleophile; cysteine thiosulfonate intermediate is C239.

The protein belongs to the PAPS reductase family. CysH subfamily.

Its subcellular location is the cytoplasm. It catalyses the reaction [thioredoxin]-disulfide + sulfite + adenosine 3',5'-bisphosphate + 2 H(+) = [thioredoxin]-dithiol + 3'-phosphoadenylyl sulfate. It participates in sulfur metabolism; hydrogen sulfide biosynthesis; sulfite from sulfate: step 3/3. In terms of biological role, catalyzes the formation of sulfite from phosphoadenosine 5'-phosphosulfate (PAPS) using thioredoxin as an electron donor. The chain is Phosphoadenosine 5'-phosphosulfate reductase from Alteromonas mediterranea (strain DSM 17117 / CIP 110805 / LMG 28347 / Deep ecotype).